The chain runs to 670 residues: MALCGVCSTPNLPNLQVFRSVRNSSIGYKRNHSLWQLRSSSFRAKSVIFHCSSSLRQSPSNVEEIDDNPSVSLEDESAHVMQFKWSDFRILDRVSIGHGGRADELVFEAIVQVPDSPLFNQGVVLRKLNTTRAQRRGRRAIEVFKKLVRRRLLYHSYSMQVHGYITNNLSDDQYSFTLVHGCHGSFSIRHWLQQSDWIPTLEATLALDEESFRRVGDDTTGGPAVSRQLRLIRTLMRDILIGVNYLHSHGLAHTELRLENVHISPVDRHIKVGILGNAADFNGDVPSTSNAYSTMDRRQMMIAFDMRCVGFMMAKMVLQELMDPLIFAKLKSFLAKGNDPSSLREFFVTTLNTNSESGNTGVQILDRNWGAGWHLLSLLIATRPSERISCLDALKHPFLCGPRWRVAPSMDIIRWGLGSTAVKISEEYIYRMPQRQRLAHFIGLMEMLNPYPKPNCWLELLPGRWRLLYSTGKHIGLTLRQPSTRALIGNVHLTITRASESINNTSLSFTSDIRFTAITSKDWPHNKIGAAGKLQTLSQFRLIAGKRLYLKEEKKNIGKFSMGEPDAEEGLAEKLETEKWKKVVPFKEFPSSLPVAKLVSGEIEVTMNMNDHIDSPGSVIGEVRKQIPPEMFDLSKLVCGTYIDSRLLVLRCVNGSALLFTRSSLDHKSM.

Residues Met-1–Ser-52 constitute a chloroplast transit peptide. One can recognise a Protein kinase domain in the interval Phe-88 to Leu-399.

The protein belongs to the PAP/fibrillin family. Post-translationally, not autophosphorylated. In terms of tissue distribution, expressed in roots.

It localises to the plastid. It is found in the chloroplast. Directly regulated by DOF3.6/OBP3; unknown function. The chain is Probable plastid-lipid-associated protein 14, chloroplastic (PAP14) from Arabidopsis thaliana (Mouse-ear cress).